The primary structure comprises 200 residues: Protein DMP7 (200 aa).

The next 4 helical transmembrane spans lie at 37 to 57 (LSNLLPTGSVMSFQIMCPVLT), 69 to 89 (WLTCFLVSLCAISCFLFSFTD), 129 to 149 (ILDFIHAIMSMLVFFAVSMFD), and 167 to 187 (ILTSLPFVIGVICGAFFLAFP).

It belongs to the plant DMP1 protein family. Expressed in leaves, stems, flowers, siliques and roots, especially in the vasculature.

It localises to the endoplasmic reticulum membrane. Functionally, involved in membrane remodeling. In Arabidopsis thaliana (Mouse-ear cress), this protein is Protein DMP7.